The chain runs to 248 residues: Tabserin (248 aa).

The first 19 residues, 1 to 19 (MLKYSALFLYLIYVGGSES), serve as a signal peptide directing secretion. The region spanning 24–248 (IVGGVPVAEE…PYFENGLRKR (225 aa)) is the Peptidase S1 domain. Cysteine 49 and cysteine 65 are joined by a disulfide. Active-site charge relay system residues include histidine 64 and aspartate 111. 2 cysteine pairs are disulfide-bonded: cysteine 175/cysteine 189 and cysteine 201/cysteine 226. Residue serine 205 is the Charge relay system of the active site.

Belongs to the peptidase S1 family. Expressed in salivary glands.

The protein resides in the secreted. Its function is as follows. Serine protease that inhibits blood coagulation in a dose-dependent manner. May act by destroying coagulant factors to inhibit blood coagulation. The protein is Tabserin of Tabanus yao (Horsefly).